Here is a 119-residue protein sequence, read N- to C-terminus: Large ribosomal subunit protein bL20 (119 aa).

It belongs to the bacterial ribosomal protein bL20 family.

Its function is as follows. Binds directly to 23S ribosomal RNA and is necessary for the in vitro assembly process of the 50S ribosomal subunit. It is not involved in the protein synthesizing functions of that subunit. This Sorangium cellulosum (strain So ce56) (Polyangium cellulosum (strain So ce56)) protein is Large ribosomal subunit protein bL20.